The following is a 262-amino-acid chain: Small ribosomal subunit protein uS2 (262 aa).

A disordered region spans residues 236 to 262 (AGGAAEAPAAEDVQTEEAAAPEADSAE).

Belongs to the universal ribosomal protein uS2 family.

This chain is Small ribosomal subunit protein uS2, found in Psychrobacter sp. (strain PRwf-1).